A 34-amino-acid chain; its full sequence is Photosystem II reaction center protein T (34 aa).

The helical transmembrane segment at 3–23 (ALVYTFLLVSTLGIIFFAIFF) threads the bilayer.

The protein belongs to the PsbT family. In terms of assembly, PSII is composed of 1 copy each of membrane proteins PsbA, PsbB, PsbC, PsbD, PsbE, PsbF, PsbH, PsbI, PsbJ, PsbK, PsbL, PsbM, PsbT, PsbY, PsbZ, Psb30/Ycf12, at least 3 peripheral proteins of the oxygen-evolving complex and a large number of cofactors. It forms dimeric complexes.

The protein resides in the plastid. The protein localises to the chloroplast thylakoid membrane. Its function is as follows. Found at the monomer-monomer interface of the photosystem II (PS II) dimer, plays a role in assembly and dimerization of PSII. PSII is a light-driven water plastoquinone oxidoreductase, using light energy to abstract electrons from H(2)O, generating a proton gradient subsequently used for ATP formation. This chain is Photosystem II reaction center protein T, found in Solanum bulbocastanum (Wild potato).